Here is a 408-residue protein sequence, read N- to C-terminus: Neutral cholesterol ester hydrolase 1 (408 aa).

Residues 1–4 (MRSS) are Cytoplasmic-facing. A helical; Signal-anchor for type II membrane protein membrane pass occupies residues 5 to 25 (CVLLTALLALAAYYIYIPLPS). Residues 26 to 408 (SVSDPWKLML…SYIKWLDQNL (383 aa)) are Lumenal-facing. The short motif at 113 to 115 (HGG) is the Involved in the stabilization of the negatively charged intermediate by the formation of the oxyanion hole element. Residue Ser191 is part of the active site. 2 N-linked (GlcNAc...) asparagine glycosylation sites follow: Asn270 and Asn287. Catalysis depends on residues Asp348 and His378. Residue Asn389 is glycosylated (N-linked (GlcNAc...) asparagine).

This sequence belongs to the 'GDXG' lipolytic enzyme family. In terms of processing, N-glycosylated.

Its subcellular location is the cell membrane. It localises to the microsome. The enzyme catalyses a 1-O-alkyl-2-acetyl-sn-glycerol + H2O = a 1-O-alkyl-sn-glycerol + acetate + H(+). The catalysed reaction is 1-O-hexadecyl-2-acetyl-sn-glycerol + H2O = 1-O-hexadecyl-sn-glycerol + acetate + H(+). It catalyses the reaction a cholesterol ester + H2O = cholesterol + a fatty acid + H(+). It carries out the reaction cholesteryl (9Z-octadecenoate) + H2O = cholesterol + (9Z)-octadecenoate + H(+). Its function is as follows. Hydrolyzes 2-acetyl monoalkylglycerol ether (1-O-alkyl-2-acetyl-sn-glycerol), the penultimate precursor of the pathway for de novo synthesis of platelet-activating factor. May be responsible for the hydrolysis of cholesterol esters (such as cholesteryl (9Z-octadecenoate)) in macrophages. Also involved in organ detoxification by hydrolyzing exogenous organophosphorus compounds. The protein is Neutral cholesterol ester hydrolase 1 (NCEH1) of Bos taurus (Bovine).